A 413-amino-acid polypeptide reads, in one-letter code: Eukaryotic initiation factor 4A-14 (413 aa).

The short motif at 40 to 68 is the Q motif element; it reads DSFDAMGLQENLLRGIYAYGFEKPSAIQQ. The Helicase ATP-binding domain occupies 71–241; it reads IVPFCKGLDV…RKFMSKPVRI (171 aa). 84–91 is a binding site for ATP; sequence AQSGTGKT. A DEAD box motif is present at residues 189–192; that stretch reads DEAD. Residues 252 to 413 enclose the Helicase C-terminal domain; the sequence is GIKQFYVNVD…ELPANVADLL (162 aa).

The protein belongs to the DEAD box helicase family. eIF4A subfamily. EIF4F is a multi-subunit complex, the composition of which varies with external and internal environmental conditions. It is composed of at least EIF4A, EIF4E and EIF4G.

It catalyses the reaction ATP + H2O = ADP + phosphate + H(+). Its function is as follows. ATP-dependent RNA helicase which is a subunit of the eIF4F complex involved in cap recognition and is required for mRNA binding to ribosome. In the current model of translation initiation, eIF4A unwinds RNA secondary structures in the 5'-UTR of mRNAs which is necessary to allow efficient binding of the small ribosomal subunit, and subsequent scanning for the initiator codon. This is Eukaryotic initiation factor 4A-14 from Nicotiana tabacum (Common tobacco).